The chain runs to 437 residues: Inactive peptidyl-prolyl cis-trans isomerase shutdown (437 aa).

A PPIase FKBP-type domain is found at 92 to 178 (DSEVTIHYAA…RPEPALFVIV (87 aa)). 3 TPR repeats span residues 209-242 (VNAL…LRLS), 258-294 (VNAY…EKHC), and 295-327 (KALY…EPKN).

Belongs to the FKBP6 family. As to quaternary structure, interacts with Hsp83.

Its subcellular location is the cytoplasm. Co-chaperone required during oogenesis to repress transposable elements and prevent their mobilization, which is essential for the germline integrity. Acts via the piRNA metabolic process, which mediates the repression of transposable elements during meiosis by forming complexes composed of piRNAs and Piwi proteins and govern the methylation and subsequent repression of transposons. Acts as a co-chaperone via its interaction with Hsp83/HSP90 and is required for the biogenesis of all three piRNA major populations. This Bombyx mori (Silk moth) protein is Inactive peptidyl-prolyl cis-trans isomerase shutdown (shu).